Consider the following 354-residue polypeptide: Magnesium-protoporphyrin IX monomethyl ester [oxidative] cyclase 2 (354 aa).

The protein belongs to the AcsF family. The cofactor is Fe cation.

The catalysed reaction is Mg-protoporphyrin IX 13-monomethyl ester + 3 NADPH + 3 O2 + 2 H(+) = 3,8-divinyl protochlorophyllide a + 3 NADP(+) + 5 H2O. The protein operates within porphyrin-containing compound metabolism; chlorophyll biosynthesis (light-independent). Its function is as follows. Catalyzes the formation of the isocyclic ring in chlorophyll biosynthesis. Mediates the cyclase reaction, which results in the formation of divinylprotochlorophyllide (Pchlide) characteristic of all chlorophylls from magnesium-protoporphyrin IX 13-monomethyl ester (MgPMME). This is Magnesium-protoporphyrin IX monomethyl ester [oxidative] cyclase 2 from Thermosynechococcus vestitus (strain NIES-2133 / IAM M-273 / BP-1).